We begin with the raw amino-acid sequence, 270 residues long: Phospholysine phosphohistidine inorganic pyrophosphate phosphatase (270 aa).

Mg(2+)-binding residues include Asp-17 and Ser-19. Substrate is bound by residues 17 to 19, 54 to 55, and Lys-189; these read DIS and TN. Asp-214 lines the Mg(2+) pocket.

This sequence belongs to the HAD-like hydrolase superfamily. As to quaternary structure, homodimer. Mg(2+) is required as a cofactor.

It localises to the cytoplasm. The protein resides in the nucleus. The enzyme catalyses diphosphate + H2O = 2 phosphate + H(+). In terms of biological role, phosphatase that hydrolyzes imidodiphosphate, 3-phosphohistidine and 6-phospholysine. Has broad substrate specificity and can also hydrolyze inorganic diphosphate, but with lower efficiency. The protein is Phospholysine phosphohistidine inorganic pyrophosphate phosphatase (Lhpp) of Mus musculus (Mouse).